A 164-amino-acid polypeptide reads, in one-letter code: 6,7-dimethyl-8-ribityllumazine synthase (164 aa).

5-amino-6-(D-ribitylamino)uracil contacts are provided by residues Tyr-27, 58–60 (ALE), and 87–89 (CVI). 92–93 (ET) contributes to the (2S)-2-hydroxy-3-oxobutyl phosphate binding site. His-95 acts as the Proton donor in catalysis. A 5-amino-6-(D-ribitylamino)uracil-binding site is contributed by Asn-120. Arg-134 lines the (2S)-2-hydroxy-3-oxobutyl phosphate pocket.

Belongs to the DMRL synthase family.

It catalyses the reaction (2S)-2-hydroxy-3-oxobutyl phosphate + 5-amino-6-(D-ribitylamino)uracil = 6,7-dimethyl-8-(1-D-ribityl)lumazine + phosphate + 2 H2O + H(+). Its pathway is cofactor biosynthesis; riboflavin biosynthesis; riboflavin from 2-hydroxy-3-oxobutyl phosphate and 5-amino-6-(D-ribitylamino)uracil: step 1/2. In terms of biological role, catalyzes the formation of 6,7-dimethyl-8-ribityllumazine by condensation of 5-amino-6-(D-ribitylamino)uracil with 3,4-dihydroxy-2-butanone 4-phosphate. This is the penultimate step in the biosynthesis of riboflavin. This is 6,7-dimethyl-8-ribityllumazine synthase from Methylocella silvestris (strain DSM 15510 / CIP 108128 / LMG 27833 / NCIMB 13906 / BL2).